A 100-amino-acid polypeptide reads, in one-letter code: Large ribosomal subunit protein uL23 (100 aa).

The protein belongs to the universal ribosomal protein uL23 family. Part of the 50S ribosomal subunit. Contacts protein L29, and trigger factor when it is bound to the ribosome.

One of the early assembly proteins it binds 23S rRNA. One of the proteins that surrounds the polypeptide exit tunnel on the outside of the ribosome. Forms the main docking site for trigger factor binding to the ribosome. This chain is Large ribosomal subunit protein uL23, found in Prochlorococcus marinus (strain MIT 9313).